The sequence spans 570 residues: Sulfite reductase [NADPH] hemoprotein beta-component (570 aa).

Cysteine 434, cysteine 440, cysteine 479, and cysteine 483 together coordinate [4Fe-4S] cluster. Cysteine 483 is a siroheme binding site.

It belongs to the nitrite and sulfite reductase 4Fe-4S domain family. Alpha(8)-beta(8). The alpha component is a flavoprotein, the beta component is a hemoprotein. The cofactor is siroheme. It depends on [4Fe-4S] cluster as a cofactor.

The enzyme catalyses hydrogen sulfide + 3 NADP(+) + 3 H2O = sulfite + 3 NADPH + 4 H(+). It participates in sulfur metabolism; hydrogen sulfide biosynthesis; hydrogen sulfide from sulfite (NADPH route): step 1/1. Its function is as follows. Component of the sulfite reductase complex that catalyzes the 6-electron reduction of sulfite to sulfide. This is one of several activities required for the biosynthesis of L-cysteine from sulfate. The polypeptide is Sulfite reductase [NADPH] hemoprotein beta-component (Salmonella agona (strain SL483)).